Consider the following 447-residue polypeptide: tRNA modification GTPase MnmE (447 aa).

(6S)-5-formyl-5,6,7,8-tetrahydrofolate is bound by residues R24, E81, and K120. One can recognise a TrmE-type G domain in the interval 216 to 371 (GLNVVIAGKP…LRKELSDIAG (156 aa)). N226 contacts K(+). GTP contacts are provided by residues 226-231 (NAGKSS), 245-251 (TDIAGTT), and 270-273 (DTAG). Residue S230 coordinates Mg(2+). The K(+) site is built by T245, I247, and T250. T251 is a Mg(2+) binding site. K447 provides a ligand contact to (6S)-5-formyl-5,6,7,8-tetrahydrofolate.

It belongs to the TRAFAC class TrmE-Era-EngA-EngB-Septin-like GTPase superfamily. TrmE GTPase family. Homodimer. Heterotetramer of two MnmE and two MnmG subunits. Requires K(+) as cofactor.

Its subcellular location is the cytoplasm. In terms of biological role, exhibits a very high intrinsic GTPase hydrolysis rate. Involved in the addition of a carboxymethylaminomethyl (cmnm) group at the wobble position (U34) of certain tRNAs, forming tRNA-cmnm(5)s(2)U34. The chain is tRNA modification GTPase MnmE from Ruthia magnifica subsp. Calyptogena magnifica.